The primary structure comprises 89 residues: Small ribosomal subunit protein uS14 (89 aa).

This sequence belongs to the universal ribosomal protein uS14 family. As to quaternary structure, part of the 30S ribosomal subunit. Contacts proteins S3 and S10.

Functionally, binds 16S rRNA, required for the assembly of 30S particles and may also be responsible for determining the conformation of the 16S rRNA at the A site. This is Small ribosomal subunit protein uS14 from Pelodictyon phaeoclathratiforme (strain DSM 5477 / BU-1).